The following is a 200-amino-acid chain: Proteasome subunit beta 2 (200 aa).

Residues 1-7 (MEEKKTG) constitute a propeptide, removed in mature form; by autocatalysis. The active-site Nucleophile is the threonine 8.

Belongs to the peptidase T1B family. As to quaternary structure, the 20S proteasome core is composed of 14 alpha and 14 beta subunits that assemble into four stacked heptameric rings, resulting in a barrel-shaped structure. The two inner rings, each composed of seven catalytic beta subunits, are sandwiched by two outer rings, each composed of seven alpha subunits. The catalytic chamber with the active sites is on the inside of the barrel. Has a gated structure, the ends of the cylinder being occluded by the N-termini of the alpha-subunits. Is capped at one or both ends by the proteasome regulatory ATPase, PAN.

It localises to the cytoplasm. It carries out the reaction Cleavage of peptide bonds with very broad specificity.. Its activity is regulated as follows. The formation of the proteasomal ATPase PAN-20S proteasome complex, via the docking of the C-termini of PAN into the intersubunit pockets in the alpha-rings, triggers opening of the gate for substrate entry. Interconversion between the open-gate and close-gate conformations leads to a dynamic regulation of the 20S proteasome proteolysis activity. Component of the proteasome core, a large protease complex with broad specificity involved in protein degradation. The polypeptide is Proteasome subunit beta 2 (Thermococcus gammatolerans (strain DSM 15229 / JCM 11827 / EJ3)).